Consider the following 476-residue polypeptide: Eukaryotic translation initiation factor 3 subunit L (476 aa).

Positions 257 to 452 (DAIRMFSHIL…DLDYALENDL (196 aa)) constitute a PCI domain.

This sequence belongs to the eIF-3 subunit L family. As to quaternary structure, component of the eukaryotic translation initiation factor 3 (eIF-3) complex.

It is found in the cytoplasm. Functionally, component of the eukaryotic translation initiation factor 3 (eIF-3) complex, which is involved in protein synthesis of a specialized repertoire of mRNAs and, together with other initiation factors, stimulates binding of mRNA and methionyl-tRNAi to the 40S ribosome. The eIF-3 complex specifically targets and initiates translation of a subset of mRNAs involved in cell proliferation. The sequence is that of Eukaryotic translation initiation factor 3 subunit L from Aspergillus fumigatus (strain CBS 144.89 / FGSC A1163 / CEA10) (Neosartorya fumigata).